A 122-amino-acid polypeptide reads, in one-letter code: Large ribosomal subunit protein uL14 (122 aa).

The protein belongs to the universal ribosomal protein uL14 family. Part of the 50S ribosomal subunit. Forms a cluster with proteins L3 and L19. In the 70S ribosome, L14 and L19 interact and together make contacts with the 16S rRNA in bridges B5 and B8.

Functionally, binds to 23S rRNA. Forms part of two intersubunit bridges in the 70S ribosome. The sequence is that of Large ribosomal subunit protein uL14 from Novosphingobium aromaticivorans (strain ATCC 700278 / DSM 12444 / CCUG 56034 / CIP 105152 / NBRC 16084 / F199).